The chain runs to 131 residues: Holo-[acyl-carrier-protein] synthase (131 aa).

Positions 9 and 58 each coordinate Mg(2+).

The protein belongs to the P-Pant transferase superfamily. AcpS family. Mg(2+) is required as a cofactor.

The protein resides in the cytoplasm. It catalyses the reaction apo-[ACP] + CoA = holo-[ACP] + adenosine 3',5'-bisphosphate + H(+). Functionally, transfers the 4'-phosphopantetheine moiety from coenzyme A to a Ser of acyl-carrier-protein. This is Holo-[acyl-carrier-protein] synthase from Salmonella arizonae (strain ATCC BAA-731 / CDC346-86 / RSK2980).